Consider the following 1895-residue polypeptide: Probable WRKY transcription factor 19 (1895 aa).

The segment at 1–85 (MSEKEELPLT…SGSGLSQQLN (85 aa)) is disordered. Polar residues predominate over residues 10–22 (TLTSIGAATATSD). Over residues 28-39 (GSSGEGISSSSS) the composition is skewed to low complexity. Residues 46–62 (MQNSPTGLMISQSSSMC) show a composition bias toward polar residues. The segment covering 75 to 85 (SSGSGLSQQLN) has biased composition (low complexity). The region spanning 291 to 371 (RPLTIDGGGN…LGFNTYLSKE (81 aa)) is the PAH domain. The segment covering 408 to 417 (ANMQPQTEYP) has biased composition (polar residues). 3 disordered regions span residues 408 to 442 (ANMQPQTEYPSSSAVQSFSSGQPQIPTSAPDSSLL), 517 to 538 (YKDRHNHEPPNQGKDGSTTYLS), and 580 to 620 (EASD…ADAS). The span at 418–427 (SSSAVQSFSS) shows a compositional bias: low complexity. A compositionally biased stretch (polar residues) spans 428–442 (GQPQIPTSAPDSSLL). Positions 462–526 (NVDKQVNDGY…YKDRHNHEPP (65 aa)) form a DNA-binding region, WRKY 1. The WRKY 2 DNA-binding region spans 635-700 (SEVDNLDDGY…SLCRRGISVY (66 aa)). Residues 666-808 (KDYDVVIRYG…EIVRDALKVL (143 aa)) enclose the TIR domain. The NB-ARC domain maps to 800-1087 (IVRDALKVLC…LDGCGFSAHV (288 aa)). 844-851 (GTVGIGKT) contributes to the ATP binding site. LRR repeat units lie at residues 1206-1227 (KLRLLHWEYYPLSSLPKSFNPE), 1228-1249 (NLVELNLPSSCAKKLWKGKKAR), 1259-1281 (KLKKMRLSYSDQLTKIPRLSSAT), 1282-1304 (NLEHIDLEGCNSLLSLSQSISYL), 1306-1328 (KLVFLNLKGCSKLENIPSMVDLE), 1329-1351 (SLEVLNLSGCSKLGNFPEISPNV), 1352-1371 (KELYMGGTMIQEIPSSIKNL), 1373-1395 (LLEKLDLENSRHLKNLPTSIYKL), 1397-1419 (HLETLNLSGCISLERFPDSSRRM), and 1421-1442 (CLRFLDLSRTDIKELPSSISYL). Positions 1562–1583 (ETVAPPSSSSEAREEEVETEET) are disordered. Residues 1626-1877 (WQKGQLLGRG…AAELLNHPFV (252 aa)) form the Protein kinase domain. Residues 1632-1640 (LGRGSLGSV) and K1654 contribute to the ATP site. D1758 is an active-site residue.

This sequence belongs to the disease resistance X-TIR-NB-LRR-X family.

It is found in the nucleus. Transcription factor. Interacts specifically with the W box (5'-(T)TGAC[CT]-3'), a frequently occurring elicitor-responsive cis-acting element. May act also as a disease resistance protein with a serine/threonine-protein kinase activity. The sequence is that of Probable WRKY transcription factor 19 (WRKY19) from Arabidopsis thaliana (Mouse-ear cress).